Here is a 1265-residue protein sequence, read N- to C-terminus: Nestin (1265 aa).

The head stretch occupies residues 1-16 (MELLGVRQPFGPQFQE). Residues 17–52 (EKYQMLELNHRLESYLGRVKLLEEENKLLREEIHTL) form a coil 1A region. One can recognise an IF rod domain in the interval 17-324 (EKYQMLELNH…ALLDSEGLRI (308 aa)). Residues 53–64 (KSSRDPAGQRKA) form a linker 1 region. Positions 65 to 160 (QEEALSQARR…QVHQENMETM (96 aa)) are coil 1B. The segment at 161–183 (QASLKQTKQVLMAPQRVQATSIP) is linker 12. Positions 184-203 (DLGQEYGYKAAQAWQEAANN) are coil 2A. The linker 2 stretch occupies residues 204-206 (YQK). A coil 2B region spans residues 207–324 (QVGRLEESLN…ALLDSEGLRI (118 aa)). Residues 325-1265 (DRPTPNKTSS…EGDSWSSGDE (941 aa)) form a tail region. A compositionally biased stretch (polar residues) spans 383–402 (PSWTLTRGTPQRPPSSTSMT). 5 disordered regions span residues 383–521 (PSWT…TEVS), 667–830 (FEVE…PDME), 863–1073 (HESL…KASQ), 1093–1116 (AQTTHASMDEHSSISPVNENLESS), and 1232–1265 (IRDDKQKDGQPAQSKIVQSDDSADEGDSWSSGDE). A compositionally biased stretch (basic and acidic residues) spans 403–418 (EKTEDHISEETKRSAE). Residues 422–441 (DQLQQEKVQQDWTLESTLPK) are compositionally biased toward polar residues. Residues 444 to 459 (AEPKPELQPEEIKVED) are compositionally biased toward basic and acidic residues. Residues 479–496 (LTSVPAEQQGSMSQTPET) are compositionally biased toward polar residues. 2 stretches are compositionally biased toward acidic residues: residues 508-520 (EVSEDGKDEDTEV) and 730-739 (LNEDQSEAEE). Basic and acidic residues-rich tracts occupy residues 784–796 (YKSDEETSHHIGE), 803–819 (EKERIDQGHLNEKRFNT), and 863–897 (HESLDVVVQESERKGNLEKEDSGDADNMRDNKEED). Over residues 901–910 (FEQNENQQLT) the composition is skewed to polar residues. Residues 911–935 (EHQHVHTEQVEDKPVHSHETQEHVN) show a composition bias toward basic and acidic residues. Over residues 943-956 (SERSQQEQLEESSL) the composition is skewed to low complexity. Positions 1015–1043 (PNASQCFQNTSLLAAATPNEQPLTFTNEV) are enriched in polar residues. Residues 1061-1070 (SEEKSTDEPK) show a composition bias toward basic and acidic residues. 2 stretches are compositionally biased toward polar residues: residues 1105-1116 (SISPVNENLESS) and 1242-1251 (PAQSKIVQSD). A compositionally biased stretch (acidic residues) spans 1252–1265 (DSADEGDSWSSGDE).

Belongs to the intermediate filament family. Forms homodimers and homotetramers in vitro. In mixtures with other intermediate filament proteins such as vimentin and alpha-internexin, preferentially forms heterodimers. Widely expressed throughout the developing nervous system at 24 hours post-fertilization (hpf). As development progresses, expression becomes restricted to proliferative zones of the developing and postembryonic central nervous system. In the peripheral nervous system, expressed in the cranial ganglia. Also expressed in mesodermal muscle precursor cells and in cranial mesenchymal tissue.

Its function is as follows. Promotes the disassembly of phosphorylated vimentin intermediate filaments (IF) during mitosis and may play a role in the trafficking and distribution of IF proteins and other cellular factors to daughter cells during progenitor cell division. Required for survival, renewal and mitogen-stimulated proliferation of neural progenitor cells. Required for brain and eye development. In Danio rerio (Zebrafish), this protein is Nestin (nes).